A 431-amino-acid polypeptide reads, in one-letter code: Glutamate--tRNA ligase 2 (431 aa).

Positions proline 6 to asparagine 16 match the 'HIGH' region motif. The 'KMSKS' region motif lies at lysine 235–arginine 239. Residue lysine 238 participates in ATP binding.

Belongs to the class-I aminoacyl-tRNA synthetase family. Glutamate--tRNA ligase type 1 subfamily. In terms of assembly, monomer.

The protein localises to the cytoplasm. The enzyme catalyses tRNA(Glu) + L-glutamate + ATP = L-glutamyl-tRNA(Glu) + AMP + diphosphate. Its function is as follows. Catalyzes the attachment of glutamate to tRNA(Glu) in a two-step reaction: glutamate is first activated by ATP to form Glu-AMP and then transferred to the acceptor end of tRNA(Glu). The polypeptide is Glutamate--tRNA ligase 2 (Campylobacter jejuni subsp. doylei (strain ATCC BAA-1458 / RM4099 / 269.97)).